A 187-amino-acid chain; its full sequence is CASP-like protein 3A2 (187 aa).

Residues 1-24 (MTSNGEGGEVVAKRRRKGIKELVQ) are Cytoplasmic-facing. A helical membrane pass occupies residues 25–45 (VALRGGCLAASATAMAVMLTA). The Extracellular segment spans residues 46–71 (TEEGVADIYGFKLTLSSNWSFSPSYQ). The N-linked (GlcNAc...) asparagine glycan is linked to asparagine 63. The helical transmembrane segment at 72 to 92 (YVVGACAGTVLYSLLQLCLGV) threads the bilayer. Residues 93–107 (YRLVTGSPITPSRFQ) are Cytoplasmic-facing. Residues 108–128 (AWLCFTSDQLFCYLMMSAGSA) form a helical membrane-spanning segment. Topologically, residues 129 to 162 (GSGVTNLNKTGIRHTPLPDFCKTLSSFCNHVALS) are extracellular. N-linked (GlcNAc...) asparagine glycosylation occurs at asparagine 136. Residues 163 to 183 (LLLVFLSFIFLASSSFFTVLV) form a helical membrane-spanning segment. At 184 to 187 (LSTP) the chain is on the cytoplasmic side.

It belongs to the Casparian strip membrane proteins (CASP) family. As to quaternary structure, homodimer and heterodimers.

Its subcellular location is the cell membrane. This Arabidopsis thaliana (Mouse-ear cress) protein is CASP-like protein 3A2.